The following is a 513-amino-acid chain: 2-isopropylmalate synthase (513 aa).

The region spanning 5–268 (LIIFDTTLRD…DVGIDTTQIV (264 aa)) is the Pyruvate carboxyltransferase domain. Asp-14, His-202, His-204, and Asn-239 together coordinate Mn(2+). The tract at residues 394–513 (RFISLSQRSE…KAVQKINPQI (120 aa)) is regulatory domain.

This sequence belongs to the alpha-IPM synthase/homocitrate synthase family. LeuA type 1 subfamily. Homodimer. Requires Mn(2+) as cofactor.

It localises to the cytoplasm. It catalyses the reaction 3-methyl-2-oxobutanoate + acetyl-CoA + H2O = (2S)-2-isopropylmalate + CoA + H(+). Its pathway is amino-acid biosynthesis; L-leucine biosynthesis; L-leucine from 3-methyl-2-oxobutanoate: step 1/4. In terms of biological role, catalyzes the condensation of the acetyl group of acetyl-CoA with 3-methyl-2-oxobutanoate (2-ketoisovalerate) to form 3-carboxy-3-hydroxy-4-methylpentanoate (2-isopropylmalate). This is 2-isopropylmalate synthase from Cupriavidus metallidurans (strain ATCC 43123 / DSM 2839 / NBRC 102507 / CH34) (Ralstonia metallidurans).